The chain runs to 851 residues: UPF0508 protein CAGL0M08074g (851 aa).

Belongs to the UPF0508 family.

This Candida glabrata (strain ATCC 2001 / BCRC 20586 / JCM 3761 / NBRC 0622 / NRRL Y-65 / CBS 138) (Yeast) protein is UPF0508 protein CAGL0M08074g.